Consider the following 779-residue polypeptide: Glutathione biosynthesis bifunctional protein GshAB (779 aa).

A glutamate--cysteine ligase region spans residues 1 to 346 (MAFSKNILDS…ETANRNQEQA (346 aa)). One can recognise an ATP-grasp domain in the interval 512 to 768 (KKILDQAGIN…LDDKILDALG (257 aa)). Position 539 to 597 (539 to 597 (PYYRGRAIVIKPKSTNFGIGITIIKENNRHDFFAQGIAQAFKHEATVLIENFSSGKEYR)) interacts with ATP. Asp-719, Glu-738, and Asn-740 together coordinate Mg(2+). Residues Asp-719, Glu-738, and Asn-740 each contribute to the Mn(2+) site.

This sequence in the N-terminal section; belongs to the glutamate--cysteine ligase type 1 family. Type 2 subfamily. In terms of assembly, monomer. The cofactor is Mg(2+). It depends on Mn(2+) as a cofactor.

The catalysed reaction is L-cysteine + L-glutamate + ATP = gamma-L-glutamyl-L-cysteine + ADP + phosphate + H(+). The enzyme catalyses gamma-L-glutamyl-L-cysteine + glycine + ATP = glutathione + ADP + phosphate + H(+). It functions in the pathway sulfur metabolism; glutathione biosynthesis; glutathione from L-cysteine and L-glutamate: step 1/2. The protein operates within sulfur metabolism; glutathione biosynthesis; glutathione from L-cysteine and L-glutamate: step 2/2. Functionally, synthesizes glutathione from L-glutamate and L-cysteine via gamma-L-glutamyl-L-cysteine. In Desulfotalea psychrophila (strain LSv54 / DSM 12343), this protein is Glutathione biosynthesis bifunctional protein GshAB.